A 292-amino-acid polypeptide reads, in one-letter code: Probable deoxyhypusine synthase (292 aa).

Lysine 267 (nucleophile) is an active-site residue.

It belongs to the deoxyhypusine synthase family. Requires NAD(+) as cofactor.

The enzyme catalyses [eIF5A protein]-L-lysine + spermidine = [eIF5A protein]-deoxyhypusine + propane-1,3-diamine. It participates in protein modification; eIF5A hypusination. In terms of biological role, catalyzes the NAD-dependent oxidative cleavage of spermidine and the subsequent transfer of the butylamine moiety of spermidine to the epsilon-amino group of a specific lysine residue of the eIF-5A precursor protein to form the intermediate deoxyhypusine residue. In Pyrobaculum aerophilum (strain ATCC 51768 / DSM 7523 / JCM 9630 / CIP 104966 / NBRC 100827 / IM2), this protein is Probable deoxyhypusine synthase (dys).